We begin with the raw amino-acid sequence, 321 residues long: Non-canonical heme oxygenase HOZ, chloroplastic (321 aa).

A chloroplast-targeting transit peptide spans 1 to 45; it reads MKSLVAHFSTPLITARLVPRCIIHRASISAVSFSTVRRRFSPLTM. The dimerization stretch occupies residues 96–116; sequence CGMLSTFSQKYEGYPSGSMVD. Heme b contacts are provided by S130, V134, and H135. Dimerization stretches follow at residues 144-166 and 205-208; these read KCSLLIARDPEDRTGLRITLHGD and KVVR.

In terms of assembly, homodimer. Binds to heme in the interdimer interface; the heme iron is coordinated by a fixed water molecule.

It localises to the plastid. The protein resides in the chloroplast. Dimeric beta-barrel protein binding to heme and catalyzing its degradation to produce biliverdin. May function in the tetrapyrrole biosynthetic pathway. This Arabidopsis thaliana (Mouse-ear cress) protein is Non-canonical heme oxygenase HOZ, chloroplastic.